A 786-amino-acid polypeptide reads, in one-letter code: LPS-assembly protein LptD (786 aa).

Positions 1–39 are cleaved as a signal peptide; the sequence is MPPKPLFPNVFPGDGAPRKRRLALALLAVPGLVPAVSYA. Positions 767–786 are disordered; sequence PGYTPLPPPPPPMSRFSNYE. Residues 770–779 show a composition bias toward pro residues; it reads TPLPPPPPPM.

Belongs to the LptD family. Component of the lipopolysaccharide transport and assembly complex. Interacts with LptE and LptA.

The protein resides in the cell outer membrane. Functionally, together with LptE, is involved in the assembly of lipopolysaccharide (LPS) at the surface of the outer membrane. The polypeptide is LPS-assembly protein LptD (Burkholderia cenocepacia (strain HI2424)).